We begin with the raw amino-acid sequence, 508 residues long: Protein phosphatase PP2A regulatory subunit B (508 aa).

WD repeat units lie at residues 19–58 (TEADIISTVEFDHTGDFLATGDKGGRVVLFERNQSKKKQS), 81–122 (EIEE…IKLV), 166–204 (AHAYHINSISVNSDQETYLSADDLRINLWNLGIADQSFN), 215–255 (ELTE…LCDS), 274–312 (EITSSISDVKFSHDGRYIASRDYMTVKIWDLAMENKPIK), and 329–370 (ENDA…GNDD). The disordered stretch occupies residues 369–466 (DDKPKFKSAF…MRRRMTSGVG (98 aa)). The segment covering 396–418 (DDDDDDDDDDDDEEADDEFDEEV) has biased composition (acidic residues). Residues 447–461 (FKSKKSGQHPMRRRM) are compositionally biased toward basic residues. Residues 477-507 (DFKKSILHLSWHPRENSVAIAATNNLYIFST) form a WD 7 repeat.

The protein belongs to the phosphatase 2A regulatory subunit B family. In terms of assembly, PP2A exists in several trimeric forms, all of which consist of a core composed of a catalytic subunit associated with a 65 kDa (PR65) (Subunit A) and a 55 kDa (PR55) (Subunit B) regulatory subunit.

Phosphatase 2A affects a variety of biological processes in the cell such as transcription, cell cycle progression and cellular morphogenesis, and provides an initial identification of critical substrates for this phosphatase. The regulatory subunit may direct the catalytic subunit to distinct, albeit overlapping, subsets of substrates. This is Protein phosphatase PP2A regulatory subunit B (CDC55) from Candida tropicalis (Yeast).